The following is a 199-amino-acid chain: MKRLILASSSPRRIELLKQFGIEFEIIPSNIDESIDQSLSVEENVMQLAKKKAQEVFNKLREENKHFLVIAADTLVFVEGVILGKPSNEDEAFWMLRKISGKWHSVYTGVCIIDGPRERILVEYEKSNVYIKHMSDEEILRYISTKEPFDKAGAYAIQGFGSLIVERIDGCFYNVVGLPLYRLNIMLQKLGYDLMKGEL.

Catalysis depends on D73, which acts as the Proton acceptor.

It belongs to the Maf family. YhdE subfamily. A divalent metal cation is required as a cofactor.

The protein resides in the cytoplasm. It carries out the reaction dTTP + H2O = dTMP + diphosphate + H(+). The enzyme catalyses UTP + H2O = UMP + diphosphate + H(+). Functionally, nucleoside triphosphate pyrophosphatase that hydrolyzes dTTP and UTP. May have a dual role in cell division arrest and in preventing the incorporation of modified nucleotides into cellular nucleic acids. This chain is dTTP/UTP pyrophosphatase, found in Caldicellulosiruptor bescii (strain ATCC BAA-1888 / DSM 6725 / KCTC 15123 / Z-1320) (Anaerocellum thermophilum).